The following is a 214-amino-acid chain: tRNA (guanine-N(7)-)-methyltransferase (214 aa).

Residues Glu43, Glu68, Asp95, and Asp117 each contribute to the S-adenosyl-L-methionine site. Asp117 is an active-site residue. Residues Lys121, Asp153, and 190-193 (TEYE) each bind substrate.

It belongs to the class I-like SAM-binding methyltransferase superfamily. TrmB family.

It carries out the reaction guanosine(46) in tRNA + S-adenosyl-L-methionine = N(7)-methylguanosine(46) in tRNA + S-adenosyl-L-homocysteine. Its pathway is tRNA modification; N(7)-methylguanine-tRNA biosynthesis. Catalyzes the formation of N(7)-methylguanine at position 46 (m7G46) in tRNA. The sequence is that of tRNA (guanine-N(7)-)-methyltransferase from Staphylococcus haemolyticus (strain JCSC1435).